A 335-amino-acid chain; its full sequence is Cathepsin B (335 aa).

Positions 1–17 (MWRLLATLSCLVLLTSA) are cleaved as a signal peptide. Residues 18-79 (RESLHFQPLS…QRAAFAADMI (62 aa)) constitute a propeptide, activation peptide. Disulfide bonds link Cys-93-Cys-122, Cys-105-Cys-150, Cys-141-Cys-207, Cys-142-Cys-146, Cys-179-Cys-211, and Cys-187-Cys-198. Residue Cys-108 is part of the active site. Asn-192 is a glycosylation site (N-linked (GlcNAc...) asparagine). N6-acetyllysine is present on Lys-220. A disulfide bond links Cys-227 and Cys-331. Residues His-278 and Asn-298 contribute to the active site. The propeptide occupies 333–335 (PHF).

The protein belongs to the peptidase C1 family. As to quaternary structure, dimer of a heavy chain and a light chain cross-linked by a disulfide bond. Interacts with SRPX2. Directly interacts with SHKBP1. In terms of tissue distribution, expressed in heart (at protein level).

It is found in the lysosome. It localises to the melanosome. The protein localises to the secreted. Its subcellular location is the extracellular space. The protein resides in the apical cell membrane. The enzyme catalyses Hydrolysis of proteins with broad specificity for peptide bonds. Preferentially cleaves -Arg-Arg-|-Xaa bonds in small molecule substrates (thus differing from cathepsin L). In addition to being an endopeptidase, shows peptidyl-dipeptidase activity, liberating C-terminal dipeptides.. In terms of biological role, thiol protease which is believed to participate in intracellular degradation and turnover of proteins. Cleaves matrix extracellular phosphoglycoprotein MEPE. Involved in the solubilization of cross-linked TG/thyroglobulin in the thyroid follicle lumen. Has also been implicated in tumor invasion and metastasis. The polypeptide is Cathepsin B (CTSB) (Sus scrofa (Pig)).